The sequence spans 114 residues: Fatty acid-binding protein, liver (114 aa).

The protein belongs to the calycin superfamily. Fatty-acid binding protein (FABP) family. Post-translationally, the N-terminus is blocked.

Its subcellular location is the cytoplasm. FABPs are thought to play a role in the intracellular transport of long-chain fatty acids and their acyl-CoA esters. This is Fatty acid-binding protein, liver from Lethenteron camtschaticum (Japanese lamprey).